The following is a 393-amino-acid chain: Lysine/ornithine decarboxylase (393 aa).

Position 51 is an N6-(pyridoxal phosphate)lysine (lysine 51). Cysteine 323 serves as the catalytic Proton donor; shared with dimeric partner.

It belongs to the Orn/Lys/Arg decarboxylase class-II family. As to quaternary structure, homodimer. Requires pyridoxal 5'-phosphate as cofactor.

It carries out the reaction L-lysine + H(+) = cadaverine + CO2. The catalysed reaction is L-ornithine + H(+) = putrescine + CO2. It functions in the pathway amine and polyamine biosynthesis; putrescine biosynthesis via L-ornithine pathway; putrescine from L-ornithine: step 1/1. With respect to regulation, inhibited competitively by both alpha-difluoromethyllysine and alpha-difluoromethylornithine. Functionally, decarboxylates both L-lysine and L-ornithine with similar catalytic efficiency. The chain is Lysine/ornithine decarboxylase (ldc) from Selenomonas ruminantium.